The chain runs to 396 residues: MSKEKFERTKPHVNVGTIGHVDHGKTTLTAAITKVMAEVRGGEFKDYADIDNAPEERERGITISTAHVEYESEIRHYAHVDCPGHADYIKNMITGAAQMDGAIIVIAATDGPMAQTREHILLSKQVGVPYIVVYMNKADMVDDEELVELVEMEIRELLDEYDFPGDDTPVIFGSALKALEGDISDIGVPSILKLVDALDSYIPTPKRDTDKSFIMPIEDVFSISGRGTVVTGRIEAGVVNIGDELEIVGIKDTKTTTCTGVEMFRKLLSSGEAGDNVGVLLRGTKREEVERGQVLSKPGSIKPHAKFEAEIYILSKDEGGRHTPFFNNYRPQFYFRTTDVTGACQLPDGIEMVMPGDNVKMRVELLSPIAMEDGLRFAIREGGRTVGAGVVSKVTD.

The tr-type G domain maps to 10-206 (KPHVNVGTIG…ALDSYIPTPK (197 aa)). A G1 region spans residues 19–26 (GHVDHGKT). Position 19-26 (19-26 (GHVDHGKT)) interacts with GTP. T26 serves as a coordination point for Mg(2+). The interval 60-64 (GITIS) is G2. Residues 81–84 (DCPG) are G3. GTP contacts are provided by residues 81–85 (DCPGH) and 136–139 (NKAD). Positions 136-139 (NKAD) are G4. The interval 174–176 (SAL) is G5.

Belongs to the TRAFAC class translation factor GTPase superfamily. Classic translation factor GTPase family. EF-Tu/EF-1A subfamily. Monomer.

The protein localises to the cytoplasm. The enzyme catalyses GTP + H2O = GDP + phosphate + H(+). Its function is as follows. GTP hydrolase that promotes the GTP-dependent binding of aminoacyl-tRNA to the A-site of ribosomes during protein biosynthesis. The chain is Elongation factor Tu from Vesicomyosocius okutanii subsp. Calyptogena okutanii (strain HA).